The following is a 181-amino-acid chain: Adenine phosphoribosyltransferase (181 aa).

This sequence belongs to the purine/pyrimidine phosphoribosyltransferase family. As to quaternary structure, homodimer.

The protein localises to the cytoplasm. The enzyme catalyses AMP + diphosphate = 5-phospho-alpha-D-ribose 1-diphosphate + adenine. It functions in the pathway purine metabolism; AMP biosynthesis via salvage pathway; AMP from adenine: step 1/1. Catalyzes a salvage reaction resulting in the formation of AMP, that is energically less costly than de novo synthesis. In Neorhizobium galegae (Rhizobium galegae), this protein is Adenine phosphoribosyltransferase.